The primary structure comprises 459 residues: Glycosyl hydrolase family 109 protein (459 aa).

The segment at residues 1 to 31 (MHNIHRRHFLKAAGAVTAGLITANITASTHA) is a signal peptide (tat-type signal). Residues 64–65 (ER), aspartate 86, 135–138 (WEWH), 155–156 (EV), and asparagine 184 contribute to the NAD(+) site. Substrate-binding positions include tyrosine 213, arginine 232, 244 to 247 (YPTH), and tyrosine 326. Tyrosine 244 is a binding site for NAD(+).

It belongs to the Gfo/Idh/MocA family. Glycosyl hydrolase 109 subfamily. It depends on NAD(+) as a cofactor. Post-translationally, predicted to be exported by the Tat system. The position of the signal peptide cleavage has not been experimentally proven.

In terms of biological role, glycosidase. This is Glycosyl hydrolase family 109 protein from Shewanella putrefaciens (strain CN-32 / ATCC BAA-453).